The primary structure comprises 258 residues: 2-succinyl-6-hydroxy-2,4-cyclohexadiene-1-carboxylate synthase (258 aa).

It belongs to the AB hydrolase superfamily. MenH family. Monomer.

The catalysed reaction is 5-enolpyruvoyl-6-hydroxy-2-succinyl-cyclohex-3-ene-1-carboxylate = (1R,6R)-6-hydroxy-2-succinyl-cyclohexa-2,4-diene-1-carboxylate + pyruvate. The protein operates within quinol/quinone metabolism; 1,4-dihydroxy-2-naphthoate biosynthesis; 1,4-dihydroxy-2-naphthoate from chorismate: step 3/7. Its pathway is quinol/quinone metabolism; menaquinone biosynthesis. Catalyzes a proton abstraction reaction that results in 2,5-elimination of pyruvate from 2-succinyl-5-enolpyruvyl-6-hydroxy-3-cyclohexene-1-carboxylate (SEPHCHC) and the formation of 2-succinyl-6-hydroxy-2,4-cyclohexadiene-1-carboxylate (SHCHC). The polypeptide is 2-succinyl-6-hydroxy-2,4-cyclohexadiene-1-carboxylate synthase (Enterobacter sp. (strain 638)).